A 676-amino-acid polypeptide reads, in one-letter code: Head-specific guanylate cyclase (676 aa).

The region spanning threonine 466–glutamate 593 is the Guanylate cyclase domain.

Belongs to the adenylyl cyclase class-4/guanylyl cyclase family. In terms of assembly, heterodimer. Head, where it is preferentially expressed in the CNS and the retina. Not found in bodies.

Its subcellular location is the cytoplasm. The enzyme catalyses GTP = 3',5'-cyclic GMP + diphosphate. In terms of biological role, may have a role in phototransduction. Catalyzes the conversion of GTP to cGMP, a common second messenger that is utilized in a wide variety of cells and signal transduction pathways. A second subunit is required for enzyme activity. In Drosophila melanogaster (Fruit fly), this protein is Head-specific guanylate cyclase (Gycalpha99B).